The chain runs to 190 residues: Elongation factor P (190 aa).

An N6-(3,6-diaminohexanoyl)-5-hydroxylysine modification is found at Lys34.

It belongs to the elongation factor P family. May be beta-lysylated on the epsilon-amino group of Lys-34 by the combined action of EpmA and EpmB, and then hydroxylated on the C5 position of the same residue by EpmC (if this protein is present). Lysylation is critical for the stimulatory effect of EF-P on peptide-bond formation. The lysylation moiety may extend toward the peptidyltransferase center and stabilize the terminal 3-CCA end of the tRNA. Hydroxylation of the C5 position on Lys-34 may allow additional potential stabilizing hydrogen-bond interactions with the P-tRNA.

The protein resides in the cytoplasm. Its pathway is protein biosynthesis; polypeptide chain elongation. Functionally, involved in peptide bond synthesis. Alleviates ribosome stalling that occurs when 3 or more consecutive Pro residues or the sequence PPG is present in a protein, possibly by augmenting the peptidyl transferase activity of the ribosome. Modification of Lys-34 is required for alleviation. The polypeptide is Elongation factor P (Psychrobacter cryohalolentis (strain ATCC BAA-1226 / DSM 17306 / VKM B-2378 / K5)).